Reading from the N-terminus, the 334-residue chain is D-fructose 1,6-bisphosphatase class 2/sedoheptulose 1,7-bisphosphatase (334 aa).

Mn(2+) is bound by residues Asp-33, Glu-57, Asp-85, and Glu-88. Substrate is bound by residues 88–90 (EGT), Tyr-119, 164–166 (RAR), and 186–188 (DGD). Glu-213 provides a ligand contact to Mn(2+).

The protein belongs to the FBPase class 2 family. Homotetramer. It depends on Mn(2+) as a cofactor.

It carries out the reaction beta-D-fructose 1,6-bisphosphate + H2O = beta-D-fructose 6-phosphate + phosphate. It catalyses the reaction D-sedoheptulose 1,7-bisphosphate + H2O = D-sedoheptulose 7-phosphate + phosphate. Its pathway is carbohydrate biosynthesis; Calvin cycle. Catalyzes the hydrolysis of fructose 1,6-bisphosphate (Fru 1,6-P2) and sedoheptulose 1,7-bisphosphate (Sed 1,7-P2) to fructose 6-phosphate and sedoheptulose 7-phosphate, respectively. The protein is D-fructose 1,6-bisphosphatase class 2/sedoheptulose 1,7-bisphosphatase of Synechococcus sp. (strain CC9605).